A 241-amino-acid polypeptide reads, in one-letter code: MNIIEFEDKEQLGKEAAALIARTIASKPDAVLGLATGGTPLDTYQELIHLYQSQQLSFKQTKTVNLDEYAGLDPDHENSYMTYMKRHLFDHIDLPQDQYFLPNGASPDLEKECLRYDQLIQDIGGIDLQLLGIGQNGHIGFNEPGTPFNSMTHVVQLDENTRQANARYFSSIDEVPTHAITMGIASILSSKKILLLASGKSKAKVIQYLEQTEIHPDFPASALKLHEDVTILIDREAGSLR.

Catalysis depends on aspartate 67, which acts as the Proton acceptor; for enolization step. Asparagine 136 serves as the catalytic For ring-opening step. Histidine 138 (proton acceptor; for ring-opening step) is an active-site residue. Glutamate 143 (for ring-opening step) is an active-site residue.

This sequence belongs to the glucosamine/galactosamine-6-phosphate isomerase family. NagB subfamily.

The enzyme catalyses alpha-D-glucosamine 6-phosphate + H2O = beta-D-fructose 6-phosphate + NH4(+). It participates in amino-sugar metabolism; N-acetylneuraminate degradation; D-fructose 6-phosphate from N-acetylneuraminate: step 5/5. Functionally, catalyzes the reversible isomerization-deamination of glucosamine 6-phosphate (GlcN6P) to form fructose 6-phosphate (Fru6P) and ammonium ion. In Bacillus pumilus (strain SAFR-032), this protein is Glucosamine-6-phosphate deaminase.